Consider the following 292-residue polypeptide: NADH-ubiquinone oxidoreductase chain 1 (292 aa).

A run of 8 helical transmembrane segments spans residues 2–22 (IVASILILIVPVLLSVAMFTL), 71–91 (FAASPMISFVLSQVAWVGICI), 98–118 (GLVIMAISSLAVYGVMLAGWA), 132–152 (VALMVSYELSLGAALLSIGLF), 167–187 (MPTTPQYAMLPLCLIFLVCIL), 213–233 (LGFALFFIAEYANMAVMSAIA), 235–255 (IYFLGGFSALKITALFFAFVW), and 272–292 (GWKAFLPLTLAFFALHASVAI).

This sequence belongs to the complex I subunit 1 family.

The protein resides in the mitochondrion inner membrane. It carries out the reaction a ubiquinone + NADH + 5 H(+)(in) = a ubiquinol + NAD(+) + 4 H(+)(out). In terms of biological role, core subunit of the mitochondrial membrane respiratory chain NADH dehydrogenase (Complex I) that is believed to belong to the minimal assembly required for catalysis. Complex I functions in the transfer of electrons from NADH to the respiratory chain. The immediate electron acceptor for the enzyme is believed to be ubiquinone. This is NADH-ubiquinone oxidoreductase chain 1 (ND1) from Chlamydomonas reinhardtii (Chlamydomonas smithii).